The following is a 707-amino-acid chain: Probable potassium transporter 17 (707 aa).

A disordered region spans residues 1-25; it reads MDLEAGSIRPRSDGEGGGPAAGRET. Topologically, residues 1-34 are cytoplasmic; sequence MDLEAGSIRPRSDGEGGGPAAGRETDDSNVWKDL. A helical membrane pass occupies residues 35–55; sequence FLAYKTLGVVFGGLVTSPLYV. The Extracellular segment spans residues 56-71; sequence YPSMNLSSPTEADYLG. Asn-60 carries an N-linked (GlcNAc...) asparagine glycan. The chain crosses the membrane as a helical span at residues 72–92; that stretch reads IYSIMFWTLTLIGVVKYVCIA. The Cytoplasmic segment spans residues 93–157; that stretch reads LNADDHGEGG…FFEQSITARR (65 aa). The helical transmembrane segment at 158–178 threads the bilayer; the sequence is VLLFVAVLGMCMLIGDGILTP. The Extracellular segment spans residues 179–194; that stretch reads AISVLSAIDGIRGPFP. A helical transmembrane segment spans residues 195 to 215; the sequence is TVSKPVVEALSAAILIGLFLL. Residues 216 to 222 are Cytoplasmic-facing; it reads QKYGTSK. A helical transmembrane segment spans residues 223-243; sequence VSFLFSPIMAAWTFTTPIIGL. At 244-276 the chain is on the extracellular side; sequence YSIVHYYPGIFKAISPYYIVHFFLRNKRQGWQL. A helical transmembrane segment spans residues 277-297; it reads LGGTVLCITGAEAMFADLGHF. Topologically, residues 298-305 are cytoplasmic; it reads SKKAIQIA. A helical transmembrane segment spans residues 306-326; it reads FLSSIYPSLVLTYAGQTAYLI. The Extracellular segment spans residues 327 to 343; the sequence is NNVNDFGDGFYKFVPRP. A helical membrane pass occupies residues 344-364; that stretch reads VYWPMFVVATLAAIVASQSLI. The Cytoplasmic portion of the chain corresponds to 365–402; it reads SATFSVIKQSVVLDYFPRVKVVHTSQHKEGEVYSPEIN. The helical transmembrane segment at 403 to 423 threads the bilayer; the sequence is YILMVLCVGVILGFGGGKAIG. Residues 424–427 are Extracellular-facing; the sequence is NAFG. The chain crosses the membrane as a helical span at residues 428–448; sequence VVVIMVMLITTVLLTLVMIII. Residues 449–454 are Cytoplasmic-facing; sequence WRTPLV. The helical transmembrane segment at 455–475 threads the bilayer; sequence LAGLYFVPFFIMEGAYVSAVF. Topologically, residues 476 to 480 are extracellular; sequence TKIPE. Residues 481–501 form a helical membrane-spanning segment; the sequence is GGWLPFAVSITLAMIMFGWYY. Residues 502–707 are Cytoplasmic-facing; the sequence is GRQRKFEYEM…RVEIGMLYKV (206 aa).

This sequence belongs to the HAK/KUP transporter (TC 2.A.72.3) family.

Its subcellular location is the membrane. Functionally, high-affinity potassium transporter. The sequence is that of Probable potassium transporter 17 (HAK17) from Oryza sativa subsp. japonica (Rice).